A 504-amino-acid polypeptide reads, in one-letter code: MTQAVMLQGTASDVGKSVLAAGLCRIFYQDGLRTAPFKSQNMALNSGITSDGKEMGRAQIFQAEAAGITPDVRMNPVLLKPTSDRQAQVVLMGKVATNMDAVSYHDYKPRLREQILAVYNSLAQEYDVIVLEGAGSPAEINLRDRDIVNMGMAEMAQCPVILVADIDRGGVFAAIYGTLALLHKQERDRVKGVIINKFRGDVALLYSGIEQIESLTGVPVLGVMPWLDVDLEDEDGVALQNDKYRGNAPRDITIAIVQLPHISNFTDFNALAAQPDVRIRYIRRPEALTDADLVILPGSKNTLSDLAWLRESGMADALLQTHRQGVPVMGICGGYQMLGDTIVDEVESGLGTQPGLGLLNTITRFAQDKITTQVNATMSGELPSWLAAAAGLPVRGYEIHMGETVLQEGCCTAMTLQRNGCSVADGAVTADGLAFGTYLHGLFDSDAFTRAVVNGLRARKGLAPWETTFCYAEHKVRQFDLLAEAMRQHIDKIYTIMQQHQEPV.

The 198-residue stretch at 251–448 (DITIAIVQLP…LHGLFDSDAF (198 aa)) folds into the GATase cobBQ-type domain. C332 acts as the Nucleophile in catalysis. H440 is a catalytic residue.

This sequence belongs to the CobB/CobQ family. CobQ subfamily.

The protein operates within cofactor biosynthesis; adenosylcobalamin biosynthesis. Its function is as follows. Catalyzes amidations at positions B, D, E, and G on adenosylcobyrinic A,C-diamide. NH(2) groups are provided by glutamine, and one molecule of ATP is hydrogenolyzed for each amidation. The polypeptide is Cobyric acid synthase (Salmonella gallinarum (strain 287/91 / NCTC 13346)).